Reading from the N-terminus, the 960-residue chain is Dynamin-like GTPase OPA1, mitochondrial (960 aa).

A mitochondrion-targeting transit peptide spans 1–87 (MWRLRRAAVA…IKYGYQPRRN (87 aa)). At 88-96 (FWPARLATR) the chain is on the mitochondrial matrix side. Residues 97 to 113 (LLKLRYLILGSAVGGGY) form a helical membrane-spanning segment. The Mitochondrial intermembrane segment spans residues 114–770 (TAKKTFDQWK…NAIENMVGPD (657 aa)). Short sequence motifs (LQQQIQ motif) lie at residues 181 to 186 (DFFTSG) and 217 to 222 (QLQEEL). Residues 210-254 (SDKEKIDQLQEELLHTQLKYQRILERLEKENKELRKLVLQKDDKG) adopt a coiled-coil conformation. Lys-228 is subject to N6-acetyllysine. An LQQQIQ motif motif is present at residues 235–240 (RLEKEN). Residues 285–561 (QDHLPRVVVV…FWKMVRESVE (277 aa)) enclose the Dynamin-type G domain. Residues 295–302 (GDQSAGKT) form a G1 motif region. Residues Ser-298, Gly-300, Lys-301, Thr-302, Ser-303, and Gly-317 each coordinate GTP. Thr-302 serves as a coordination point for Mg(2+). Residues 321-324 (MMTR) are G2 motif. Thr-323 and Asp-398 together coordinate Mg(2+). Residues 398–401 (DLPG) form a G3 motif region. Residues 467–470 (TKVD) are G4 motif. Positions 468, 470, 503, 506, and 507 each coordinate GTP. Positions 501-504 (VVTG) are G5 motif. Stalk region stretches follow at residues 589-836 (DRNE…IKDT) and 874-928 (CNDV…IKLL). The tract at residues 736–856 (SDKQQWDAAI…KTALNHCNLC (121 aa)) is paddle region. The stretch at 771–781 (WKKRWLYWKNR) is an intramembrane region. Over 782 to 960 (TQEQCVHNET…AFIEALHQEK (179 aa)) the chain is Mitochondrial intermembrane. An intrachain disulfide couples Cys-856 to Cys-874. Positions 895–960 (RQQLTNTEVR…AFIEALHQEK (66 aa)) form a coiled coil.

This sequence belongs to the TRAFAC class dynamin-like GTPase superfamily. Dynamin/Fzo/YdjA family. As to quaternary structure, oligomeric complex consisting of membrane-bound and soluble forms of OPA1. Interacts with RCC1L; RCC1L acts as a guanine nucleotide exchange factor (GEF) for OPA1 by exchanging bound GDP for free GTP. Interacts with CHCHD3 and IMMT; these interactions occur preferentially with soluble OPA1 forms. Interacts with PRELID1. Cleaved by OMA1 or YME1L downstream of the transmembrane region in response to different signals to generate soluble forms. Cleaved by OMA1 at position S1 following stress conditions, generating the short soluble form (Dynamin-like GTPase OPA1, short form; S-OPA1). AFG3L2 is involved in the regulation of OMA1-dependent processing of OPA1. PARL-dependent proteolytic processing releases an antiapoptotic soluble form not required for mitochondrial fusion. In terms of processing, cleavage at position S2 by YME1L is required to mediate oxidative phosphorylation (OXPHOS)-induced mitochondrial fusion. Cleavage occurs in the sequence motif Leu-Gln-Gln-Gln-Ile-Gln (LQQQIQ). Post-translationally, cleavage at position S2 by YME1L is required to mediate oxidative phosphorylation (OXPHOS)-induced mitochondrial fusion. Cleavage occurs in the sequence motif Leu-Gln-Gln-Gln-Ile-Gln (LQQQIQ). Cleavage at position S3 by YME1L is required for membrane tubulation. Cleavage at position S3 by YME1L is required for membrane tubulation. As to expression, highly expressed in retina. Also expressed in brain, testis, heart and skeletal muscle. Low levels of all isoforms expressed in a variety of tissues. Expressed in retina, skeletal muscle, heart, lung, ovary, colon, thyroid gland, leukocytes and fetal brain. Low levels of all isoforms expressed in a variety of tissues. In terms of tissue distribution, isoform 2 expressed in colon, liver, kidney, thyroid gland and leukocytes.

Its subcellular location is the mitochondrion inner membrane. It is found in the mitochondrion intermembrane space. The catalysed reaction is GTP + H2O = GDP + phosphate + H(+). With respect to regulation, activated by guanine nucleotide exchange factor RCC1L. In terms of biological role, dynamin-related GTPase that is essential for normal mitochondrial morphology by mediating fusion of the mitochondrial inner membranes, regulating cristae morphology and maintaining respiratory chain function. Exists in two forms: the transmembrane, long form (Dynamin-like GTPase OPA1, long form; L-OPA1), which is tethered to the inner mitochondrial membrane, and the short soluble form (Dynamin-like GTPase OPA1, short form; S-OPA1), which results from proteolytic cleavage and localizes in the intermembrane space. Both forms (L-OPA1 and S-OPA1) cooperate to catalyze the fusion of the mitochondrial inner membrane. The equilibrium between L-OPA1 and S-OPA1 is essential: excess levels of S-OPA1, produced by cleavage by OMA1 following loss of mitochondrial membrane potential, lead to an impaired equilibrium between L-OPA1 and S-OPA1, inhibiting mitochondrial fusion. The balance between L-OPA1 and S-OPA1 also influences cristae shape and morphology. Involved in remodeling cristae and the release of cytochrome c during apoptosis. Proteolytic processing by PARL in response to intrinsic apoptotic signals may lead to disassembly of OPA1 oligomers and release of the caspase activator cytochrome C (CYCS) into the mitochondrial intermembrane space. Acts as a regulator of T-helper Th17 cells, which are characterized by cells with fused mitochondria with tight cristae, by mediating mitochondrial membrane remodeling: OPA1 is required for interleukin-17 (IL-17) production. Its role in mitochondrial morphology is required for mitochondrial genome maintenance. Functionally, constitutes the transmembrane long form (L-OPA1) that plays a central role in mitochondrial inner membrane fusion and cristae morphology. L-OPA1 and the soluble short form (S-OPA1) form higher-order helical assemblies that coordinate the fusion of mitochondrial inner membranes. Inner membrane-anchored L-OPA1 molecules initiate membrane remodeling by recruiting soluble S-OPA1 to rapidly polymerize into a flexible cylindrical scaffold encaging the mitochondrial inner membrane. Once at the membrane surface, the formation of S-OPA1 helices induce bilayer curvature. OPA1 dimerization through the paddle region, which inserts into cardiolipin-containing membrane, promotes GTP hydrolysis and the helical assembly of a flexible OPA1 lattice on the membrane, which drives membrane curvature and mitochondrial fusion. Plays a role in the maintenance and remodeling of mitochondrial cristae, some invaginations of the mitochondrial inner membrane that provide an increase in the surface area. Probably acts by forming helical filaments at the inside of inner membrane tubes with the shape and dimensions of crista junctions. The equilibrium between L-OPA1 and S-OPA1 influences cristae shape and morphology: increased L-OPA1 levels promote cristae stacking and elongated mitochondria, while increased S-OPA1 levels correlated with irregular cristae packing and round mitochondria shape. Its function is as follows. Constitutes the soluble short form (S-OPA1) generated by cleavage by OMA1, which plays a central role in mitochondrial inner membrane fusion and cristae morphology. The transmembrane long form (L-OPA1) and the S-OPA1 form higher-order helical assemblies that coordinate the fusion of mitochondrial inner membranes. Inner membrane-anchored L-OPA1 molecules initiate membrane remodeling by recruiting soluble S-OPA1 to rapidly polymerize into a flexible cylindrical scaffold encaging the mitochondrial inner membrane. Once at the membrane surface, the formation of S-OPA1 helices induce bilayer curvature. OPA1 dimerization through the paddle region, which inserts into cardiolipin-containing membrane, promotes GTP hydrolysis and the helical assembly of a flexible OPA1 lattice on the membrane, which drives membrane curvature and mitochondrial fusion. Excess levels of S-OPA1 produced by cleavage by OMA1 following stress conditions that induce loss of mitochondrial membrane potential, lead to an impaired equilibrium between L-OPA1 and S-OPA1, thereby inhibiting mitochondrial fusion. Involved in mitochondrial safeguard in response to transient mitochondrial membrane depolarization by mediating flickering: cleavage by OMA1 leads to excess production of S-OPA1, preventing mitochondrial hyperfusion. Plays a role in the maintenance and remodeling of mitochondrial cristae, some invaginations of the mitochondrial inner membrane that provide an increase in the surface area. Probably acts by forming helical filaments at the inside of inner membrane tubes with the shape and dimensions of crista junctions. The equilibrium between L-OPA1 and S-OPA1 influences cristae shape and morphology: increased L-OPA1 levels promote cristae stacking and elongated mitochondria, while increased S-OPA1 levels correlated with irregular cristae packing and round mitochondria shape. Coexpression of isoform 1 with shorter alternative products is required for optimal activity in promoting mitochondrial fusion. In terms of biological role, isoforms that contain the alternative exon 4b are required for mitochondrial genome maintenance, possibly by anchoring the mitochondrial nucleoids to the inner mitochondrial membrane. The sequence is that of Dynamin-like GTPase OPA1, mitochondrial from Homo sapiens (Human).